The sequence spans 95 residues: Cobalt transport protein CbiN (95 aa).

2 helical membrane-spanning segments follow: residues 5-25 and 67-87; these read HIIL…IYAG and LLFA…IGYY.

It belongs to the CbiN family. In terms of assembly, forms an energy-coupling factor (ECF) transporter complex composed of an ATP-binding protein (A component, CbiO), a transmembrane protein (T component, CbiQ) and 2 possible substrate-capture proteins (S components, CbiM and CbiN) of unknown stoichimetry.

It localises to the cell membrane. It participates in cofactor biosynthesis; adenosylcobalamin biosynthesis. In terms of biological role, part of the energy-coupling factor (ECF) transporter complex CbiMNOQ involved in cobalt import. This Methanocaldococcus jannaschii (strain ATCC 43067 / DSM 2661 / JAL-1 / JCM 10045 / NBRC 100440) (Methanococcus jannaschii) protein is Cobalt transport protein CbiN.